Here is a 370-residue protein sequence, read N- to C-terminus: 4-hydroxy-3-methylbut-2-en-1-yl diphosphate synthase (flavodoxin) (370 aa).

Residues Cys-268, Cys-271, Cys-303, and Glu-310 each coordinate [4Fe-4S] cluster.

Belongs to the IspG family. [4Fe-4S] cluster serves as cofactor.

The catalysed reaction is (2E)-4-hydroxy-3-methylbut-2-enyl diphosphate + oxidized [flavodoxin] + H2O + 2 H(+) = 2-C-methyl-D-erythritol 2,4-cyclic diphosphate + reduced [flavodoxin]. It participates in isoprenoid biosynthesis; isopentenyl diphosphate biosynthesis via DXP pathway; isopentenyl diphosphate from 1-deoxy-D-xylulose 5-phosphate: step 5/6. Its function is as follows. Converts 2C-methyl-D-erythritol 2,4-cyclodiphosphate (ME-2,4cPP) into 1-hydroxy-2-methyl-2-(E)-butenyl 4-diphosphate. The protein is 4-hydroxy-3-methylbut-2-en-1-yl diphosphate synthase (flavodoxin) of Bacillus pumilus (strain SAFR-032).